Here is a 101-residue protein sequence, read N- to C-terminus: Urease subunit beta (101 aa).

This sequence belongs to the urease beta subunit family. As to quaternary structure, heterotrimer of UreA (gamma), UreB (beta) and UreC (alpha) subunits. Three heterotrimers associate to form the active enzyme.

It localises to the cytoplasm. It catalyses the reaction urea + 2 H2O + H(+) = hydrogencarbonate + 2 NH4(+). The protein operates within nitrogen metabolism; urea degradation; CO(2) and NH(3) from urea (urease route): step 1/1. The polypeptide is Urease subunit beta (Leptothrix cholodnii (strain ATCC 51168 / LMG 8142 / SP-6) (Leptothrix discophora (strain SP-6))).